Reading from the N-terminus, the 353-residue chain is Putative actin-28 (353 aa).

Belongs to the actin family.

The protein resides in the cytoplasm. It is found in the cytoskeleton. The catalysed reaction is ATP + H2O = ADP + phosphate + H(+). Actins are highly conserved proteins that are involved in various types of cell motility and are ubiquitously expressed in all eukaryotic cells. Multiple isoforms are involved in various cellular functions such as cytoskeleton structure, cell mobility, chromosome movement and muscle contraction. The protein is Putative actin-28 (act28) of Dictyostelium discoideum (Social amoeba).